Here is a 410-residue protein sequence, read N- to C-terminus: Phthiocerol/phthiodiolone dimycocerosyl transferase (410 aa).

Residue histidine 118 is the Proton acceptor of the active site.

This sequence belongs to the acyltransferase PapA5 family. As to quaternary structure, monomer. Interacts directly with the acyl carrier protein (ACP) domain of the mycocerosic acid synthase (mas) protein.

It carries out the reaction 2 a mycocerosyl-[mycocerosic acid synthase] + a phthiocerol = a dimycocerosyl phthiocerol + 2 holo-[mycocerosic acid synthase].. The catalysed reaction is 2 a mycocerosyl-[mycocerosic acid synthase] + a phthiodiolone = a dimycocerosyl phthiodiolone + 2 holo-[mycocerosic acid synthase].. The enzyme catalyses 2 a mycocerosyl-[mycocerosic acid synthase] + a phenolphthiocerol = a dimycocerosyl phenolphthiocerol + 2 holo-[mycocerosic acid synthase].. Catalyzes diesterification of phthiocerol, phthiodiolone, and phenolphthiocerol with mycocerosic acids, the final step in the phthiocerol, phthiodiolone and phenolphthiocerol dimycocerosate esters (PDIM) synthesis. Can directly transfer the mycocerosate bound to the mycocerosic acid synthase (mas) onto the substrate alcohols. This is Phthiocerol/phthiodiolone dimycocerosyl transferase (papA5) from Mycobacterium sp. (strain JLS).